A 435-amino-acid polypeptide reads, in one-letter code: Amidase 1 (435 aa).

Catalysis depends on charge relay system residues lysine 38 and serine 115. Serine 139 acts as the Acyl-ester intermediate in catalysis.

Belongs to the amidase family.

The protein resides in the cytoplasm. Its subcellular location is the nucleus. It localises to the nucleoplasm. It carries out the reaction a monocarboxylic acid amide + H2O = a monocarboxylate + NH4(+). In terms of biological role, amidase involved in auxin biosynthesis. Converts indole-3-acetamide (IAM) to indole-3-acetate, and phenyl-2-acetamide (PAM) to phenyl-2-acetate. Substrate preference is PAM &gt; IAM. In Oryza sativa subsp. japonica (Rice), this protein is Amidase 1.